Reading from the N-terminus, the 238-residue chain is Large ribosomal subunit protein uL1 (238 aa).

The disordered stretch occupies residues 217-238 (TNGPGVPVDETIQKNYADDAEA).

The protein belongs to the universal ribosomal protein uL1 family. As to quaternary structure, part of the 50S ribosomal subunit.

Its function is as follows. Binds directly to 23S rRNA. The L1 stalk is quite mobile in the ribosome, and is involved in E site tRNA release. Protein L1 is also a translational repressor protein, it controls the translation of the L11 operon by binding to its mRNA. In Corynebacterium urealyticum (strain ATCC 43042 / DSM 7109), this protein is Large ribosomal subunit protein uL1.